Reading from the N-terminus, the 244-residue chain is Phosphoadenosine 5'-phosphosulfate reductase (244 aa).

The Nucleophile; cysteine thiosulfonate intermediate role is filled by C239.

Belongs to the PAPS reductase family. CysH subfamily.

Its subcellular location is the cytoplasm. The catalysed reaction is [thioredoxin]-disulfide + sulfite + adenosine 3',5'-bisphosphate + 2 H(+) = [thioredoxin]-dithiol + 3'-phosphoadenylyl sulfate. It participates in sulfur metabolism; hydrogen sulfide biosynthesis; sulfite from sulfate: step 3/3. Functionally, catalyzes the formation of sulfite from phosphoadenosine 5'-phosphosulfate (PAPS) using thioredoxin as an electron donor. This is Phosphoadenosine 5'-phosphosulfate reductase from Shigella dysenteriae serotype 1 (strain Sd197).